Here is a 192-residue protein sequence, read N- to C-terminus: MVFGSKVIKSGGAEPDAFEGQIGQAILELEMNSDLKPQLRDLHITRAREIEFNNKKAIVIYVPVPKQKAFQKVQTRLVRELEKKFSGKHVVFIGERRILPKPQRGRRDPNKQKRPRSRTLTAVYDAILEDLVFPAEVVGKRIRVKLDGSQLIKVHLDKNQQTTIEHKVDTFTSVYKKLTGRDVTFEFPEPYL.

The protein belongs to the eukaryotic ribosomal protein eS7 family.

In Culex quinquefasciatus (Southern house mosquito), this protein is Small ribosomal subunit protein eS7 (RpS7).